The following is a 261-amino-acid chain: Adenosylcobinamide-GDP ribazoletransferase (261 aa).

5 helical membrane passes run 12–32 (NLFF…WVVI), 46–66 (LVGL…QLIL), 67–87 (PASI…GAFH), 120–140 (GALS…ELAL), and 199–219 (IFVL…TLWL).

It belongs to the CobS family. Requires Mg(2+) as cofactor.

It localises to the cell inner membrane. It catalyses the reaction alpha-ribazole + adenosylcob(III)inamide-GDP = adenosylcob(III)alamin + GMP + H(+). It carries out the reaction alpha-ribazole 5'-phosphate + adenosylcob(III)inamide-GDP = adenosylcob(III)alamin 5'-phosphate + GMP + H(+). It participates in cofactor biosynthesis; adenosylcobalamin biosynthesis; adenosylcobalamin from cob(II)yrinate a,c-diamide: step 7/7. Its function is as follows. Joins adenosylcobinamide-GDP and alpha-ribazole to generate adenosylcobalamin (Ado-cobalamin). Also synthesizes adenosylcobalamin 5'-phosphate from adenosylcobinamide-GDP and alpha-ribazole 5'-phosphate. This chain is Adenosylcobinamide-GDP ribazoletransferase, found in Shewanella frigidimarina (strain NCIMB 400).